We begin with the raw amino-acid sequence, 142 residues long: Transcriptional regulator MraZ (142 aa).

2 consecutive SpoVT-AbrB domains span residues 5–47 (THTP…PTPE) and 76–119 (AHDE…DRVA).

Belongs to the MraZ family. As to quaternary structure, forms oligomers.

The protein localises to the cytoplasm. It is found in the nucleoid. The chain is Transcriptional regulator MraZ from Salinispora tropica (strain ATCC BAA-916 / DSM 44818 / JCM 13857 / NBRC 105044 / CNB-440).